An 85-amino-acid chain; its full sequence is MAHKKAGGSTRNGRDSEAKRLGVKRFGGETVLAGSIIVRQRGTKFHAGNNVGCGRDHTLFAKADGKVKFEVKGPNNRKYISIVAE.

Positions 1–20 are disordered; that stretch reads MAHKKAGGSTRNGRDSEAKR.

This sequence belongs to the bacterial ribosomal protein bL27 family.

This is Large ribosomal subunit protein bL27 from Enterobacter sp. (strain 638).